The primary structure comprises 319 residues: Probable cell division protein WhiA (319 aa).

Positions 277–310 (SLEELGKLAEPAMTKDAIAGRIRRLLCLADKRAK) form a DNA-binding region, H-T-H motif.

The protein belongs to the WhiA family.

Its function is as follows. Involved in cell division and chromosome segregation. This Tropheryma whipplei (strain Twist) (Whipple's bacillus) protein is Probable cell division protein WhiA.